A 287-amino-acid polypeptide reads, in one-letter code: Probable endoribonuclease YicC (287 aa).

This sequence belongs to the YicC/YloC family. The cofactor is a divalent metal cation.

Probably a ssRNA endonuclease. Its function is as follows. Might contribute to small RNA (sRNA) regulation. The polypeptide is Probable endoribonuclease YicC (Salmonella typhimurium (strain LT2 / SGSC1412 / ATCC 700720)).